The sequence spans 328 residues: Tetraacyldisaccharide 4'-kinase (328 aa).

55–62 is a binding site for ATP; it reads TAGGNGKT.

Belongs to the LpxK family.

The catalysed reaction is a lipid A disaccharide + ATP = a lipid IVA + ADP + H(+). It participates in glycolipid biosynthesis; lipid IV(A) biosynthesis; lipid IV(A) from (3R)-3-hydroxytetradecanoyl-[acyl-carrier-protein] and UDP-N-acetyl-alpha-D-glucosamine: step 6/6. Transfers the gamma-phosphate of ATP to the 4'-position of a tetraacyldisaccharide 1-phosphate intermediate (termed DS-1-P) to form tetraacyldisaccharide 1,4'-bis-phosphate (lipid IVA). This chain is Tetraacyldisaccharide 4'-kinase, found in Shigella dysenteriae serotype 1 (strain Sd197).